A 282-amino-acid polypeptide reads, in one-letter code: tRNA pseudouridine synthase B (282 aa).

The active-site Nucleophile is D39.

It belongs to the pseudouridine synthase TruB family. Type 1 subfamily.

It carries out the reaction uridine(55) in tRNA = pseudouridine(55) in tRNA. Responsible for synthesis of pseudouridine from uracil-55 in the psi GC loop of transfer RNAs. The chain is tRNA pseudouridine synthase B from Borrelia garinii subsp. bavariensis (strain ATCC BAA-2496 / DSM 23469 / PBi) (Borreliella bavariensis).